The primary structure comprises 93 residues: MPKPDIHPNWYPDAKVICNGEVVMTTGSTQPELHVDVWSGNHPFFTGTQKILDTEGRVDRFMRKYGMGSADAAADEKKTDAKNNNKDNTSKED.

Positions Gly68–Asp93 are disordered. Residues Ala74 to Asp93 are compositionally biased toward basic and acidic residues.

The protein belongs to the bacterial ribosomal protein bL31 family. Type A subfamily. In terms of assembly, part of the 50S ribosomal subunit.

Its function is as follows. Binds the 23S rRNA. The polypeptide is Large ribosomal subunit protein bL31 (Prochlorococcus marinus (strain MIT 9303)).